Reading from the N-terminus, the 412-residue chain is Cytochrome p450 CYP199A2 (412 aa).

Substrate contacts are provided by residues 94–97 and Ser247; that span reads RPPS. Position 361 (Cys361) interacts with heme.

It belongs to the cytochrome P450 family. In terms of assembly, interacts with the ferredoxin-like iron-sulfur protein ThcC. Heme is required as a cofactor.

Its subcellular location is the cytoplasm. The enzyme catalyses 4-methoxybenzoate + AH2 + O2 = 4-hydroxybenzoate + formaldehyde + A + H2O. The oxidative demethylation of 4-methoxybenzoate requires the participation of the monooxygenase CYP199A2, the ferredoxin-like protein ThcC/RPA1872 and a ferredoxin reductase to mediate the transfer of electrons from NADH to CYP199A2. It is also active with 4-ethylbenzoate. The protein is Cytochrome p450 CYP199A2 of Rhodopseudomonas palustris (strain ATCC BAA-98 / CGA009).